Reading from the N-terminus, the 47-residue chain is Diuretic hormone 2 (47 aa).

Belongs to the sauvagine/corticotropin-releasing factor/urotensin I family.

It is found in the secreted. Its function is as follows. Stimulates fluid secretion by the Malpighian tubules. Increases cyclic AMP production in Malpighian tubules. The protein is Diuretic hormone 2 of Tenebrio molitor (Yellow mealworm beetle).